A 259-amino-acid polypeptide reads, in one-letter code: Hemin import ATP-binding protein HmuV (259 aa).

Residues 8–242 (ISANNISYRI…KMIENVYGHK (235 aa)) enclose the ABC transporter domain. ATP is bound at residue 40 to 47 (GPNGAGKS).

Belongs to the ABC transporter superfamily. Heme (hemin) importer (TC 3.A.1.14.5) family. In terms of assembly, the complex is composed of two ATP-binding proteins (HmuV), two transmembrane proteins (HmuU) and a solute-binding protein (HmuT).

It localises to the cell inner membrane. Part of the ABC transporter complex HmuTUV involved in hemin import. Responsible for energy coupling to the transport system. The sequence is that of Hemin import ATP-binding protein HmuV from Aliivibrio fischeri (strain ATCC 700601 / ES114) (Vibrio fischeri).